The primary structure comprises 544 residues: Esterase-6 (544 aa).

Residues 1 to 21 form the signal peptide; the sequence is MNYVGLGLIIVLSCLWLGSNA. The N-linked (GlcNAc...) asparagine glycan is linked to N42. Residues C86 and C105 are joined by a disulfide bond. The active-site Acyl-ester intermediate is the S209. C261 and C273 are joined by a disulfide. N420 and N456 each carry an N-linked (GlcNAc...) asparagine glycan. Residue H466 is the Charge relay system of the active site. An N-linked (GlcNAc...) asparagine glycan is attached at N506. C514 and C535 are disulfide-bonded.

Belongs to the type-B carboxylesterase/lipase family. Monomer. In terms of tissue distribution, specifically expressed in the ejaculatory bulbs of male.

The protein localises to the secreted. It carries out the reaction a carboxylic ester + H2O = an alcohol + a carboxylate + H(+). Functionally, transferred from the ejaculatory bulbs of males to the female genitals upon copulation, plays an important role in the reproductive biology. The chain is Esterase-6 (Est-6) from Drosophila melanogaster (Fruit fly).